The following is a 176-amino-acid chain: Cell division control protein 31 (176 aa).

Residues 1 to 12 (MFANARAKRRSR) are compositionally biased toward basic residues. Residues 1 to 21 (MFANARAKRRSRASSPTPARL) form a disordered region. EF-hand domains are found at residues 34-69 (EQRQDINEAFKLFDSDKDNAIDYHELRAAMRALGFN), 70-105 (AEKSEVLKILRDFDKTGKGYLQMEDFVRVMTEKIVE), 107-142 (DPLEEIKRAFELFDDDETGKISLRNLRRVAKELNEN), and 143-176 (IDDQELEAMIEEFDLDQDGEINEQEFIAIMMDEA). Residues aspartate 47, aspartate 49, aspartate 51, and glutamate 58 each coordinate Ca(2+). Residues aspartate 156, aspartate 158, aspartate 160, glutamate 162, and glutamate 167 each coordinate Ca(2+).

This sequence belongs to the centrin family. Component of the spindle pole body (SPB), acting as the connector of microtubule arrays in the cytoplasm and the nucleoplasm, is involved in nuclear positioning before chromosome segregation, SPB separation, spindle formation, chromosome segregation, nuclear migration into the bud, nuclear reorientation after cytokinesis and nuclear fusion during conjugation. The SPB half-bridge, which is tightly associated with the cytoplasmic side of the nuclear envelope and the SPB, is playing a key role as the starting structure for and in the initiation of SPB duplication in G1. Within the complex, interacts with sad1.

It is found in the nucleus. Required for the proper coordination between exit from mitosis and the initiation of septation. Has a role in bipolar spindle formation during spindle pole body (SPB) duplication. Required for the localization of sad1 to the SPB. The chain is Cell division control protein 31 (cdc31) from Schizosaccharomyces pombe (strain 972 / ATCC 24843) (Fission yeast).